Consider the following 104-residue polypeptide: Chemokine-like protein MC148 (104 aa).

Interacts with host CXCL12.

Its function is as follows. Plays a role in antagonizing the chemotaxis of multiple leukocyte subsets induced by CC and CXC chemokines. Displaces the interaction between CXCL12 and CXCR4 and thereby inactivates the antiviral activity of host CXCL12. In Homo sapiens (Human), this protein is Chemokine-like protein MC148 (MC148).